The following is a 139-amino-acid chain: Probable transcription termination protein NusA (139 aa).

The KH domain occupies 31–97 (DDRVVYVVTA…YNVTVSENDT (67 aa)).

This sequence belongs to the NusA family.

The protein localises to the cytoplasm. Participates in transcription termination. In Halobacterium salinarum (strain ATCC 29341 / DSM 671 / R1), this protein is Probable transcription termination protein NusA.